The sequence spans 1086 residues: DNA polymerase (1086 aa).

Residues 638–657 form a disordered region; that stretch reads STTRKPVDDVEEHSECNGFT.

This sequence belongs to the DNA polymerase type-B family.

The catalysed reaction is DNA(n) + a 2'-deoxyribonucleoside 5'-triphosphate = DNA(n+1) + diphosphate. Replicates the viral genome. Host DNA polymerases cannot substitute for the viral enzyme in this process. This Noctuidae (owlet moths) protein is DNA polymerase.